Reading from the N-terminus, the 700-residue chain is Phenylalanine ammonia-lyase hkm12 (700 aa).

The active-site Proton donor/acceptor is Y82. The 5-imidazolinone (Ala-Gly) cross-link spans 183–185 (ASG). S184 bears the 2,3-didehydroalanine (Ser) mark. Positions 242, 325, 331, 361, 432, 460, and 463 each coordinate (E)-cinnamate.

This sequence belongs to the PAL/histidase family. Contains an active site 4-methylidene-imidazol-5-one (MIO), which is formed autocatalytically by cyclization and dehydration of residues Ala-Ser-Gly.

The catalysed reaction is L-phenylalanine = (E)-cinnamate + NH4(+). Its pathway is secondary metabolite biosynthesis. Functionally, phenylalanine ammonia-lyase; part of the gene cluster that mediates the biosynthesis of hancockiamides, an unusual new family of N-cinnamoylated piperazines. The NRPS hkm10 and the NmrA-like reductase hkm9 are proposed to convert two molecules of L-Phe to the intermediary piperazine called xenocockiamide A. Xenocockiamide A is then converted to hancockiamide D via a series of hydroxylations and O-methylations. The tyrosinase hkm6 may catalyze an aromatic hydroxylation, then the 2-oxoglutarate-dependent Fe(II) dioxygenase hkm4 and the FAD-dependent phenol hydroxylase hkm7 may catalyze consecutive hydroxylations to install 2 more hydroxy groups, and the methyltransferase hkm8 probably catalyzes two methylations using 2 molecules of S-adenosyl-L-methionine (SAM). The NRPS hkm11 activates and transfers trans-cinnamate supplied by the PAL hkm12 to hancockiamide D and produces hancockiamide A. NRPS Hkm11 has the flexibility to tolerate the bulky hancockiamide G as a substrate and the absence of the acetyl-transferase hkm3 opens up the opportunity for hkm11 to introduce a second N-cinnamoyl moiety. The cytochrome P450 monooxygenase hkm5 catalyzes the methylenedioxy bridge formation, converting hancockiamide A into hancockiamide G. Hkm5 can also convert hancockiamide B into hancockiamide C, and hancockiamide D into hancockiamide H. The N-acetyltransferase hkm3 finally transfers an acetyl group to 1-N of piperazine, converting hancockiamide A into hancockiamide B and hancockiamide G into hancockiamide C. This Aspergillus hancockii protein is Phenylalanine ammonia-lyase hkm12.